Consider the following 310-residue polypeptide: Small ribosomal subunit biogenesis GTPase RsgA 2 (310 aa).

One can recognise a CP-type G domain in the interval 77-238 (LSKQSHILAA…IIDTPGIKGF (162 aa)). Residues 126–129 (NKVD) and 180–188 (GHSGVGKST) each bind GTP. C262, C267, H269, and C275 together coordinate Zn(2+).

Belongs to the TRAFAC class YlqF/YawG GTPase family. RsgA subfamily. Monomer. Associates with 30S ribosomal subunit, binds 16S rRNA. Requires Zn(2+) as cofactor.

Its subcellular location is the cytoplasm. One of several proteins that assist in the late maturation steps of the functional core of the 30S ribosomal subunit. Helps release RbfA from mature subunits. May play a role in the assembly of ribosomal proteins into the subunit. Circularly permuted GTPase that catalyzes slow GTP hydrolysis, GTPase activity is stimulated by the 30S ribosomal subunit. The chain is Small ribosomal subunit biogenesis GTPase RsgA 2 from Bacteroides thetaiotaomicron (strain ATCC 29148 / DSM 2079 / JCM 5827 / CCUG 10774 / NCTC 10582 / VPI-5482 / E50).